The chain runs to 968 residues: RNA polymerase-associated protein RapA (968 aa).

One can recognise a Helicase ATP-binding domain in the interval 163–332 (EVGRRYAPRV…FARLRLLDPD (170 aa)). 176–183 (DEVGLGKT) serves as a coordination point for ATP. The DEAH box signature appears at 278–281 (DEAH). Residues 491-655 (RVDWLIEFLK…EFAEDLLNVL (165 aa)) enclose the Helicase C-terminal domain.

It belongs to the SNF2/RAD54 helicase family. RapA subfamily. Interacts with the RNAP. Has a higher affinity for the core RNAP than for the holoenzyme. Its ATPase activity is stimulated by binding to RNAP.

Transcription regulator that activates transcription by stimulating RNA polymerase (RNAP) recycling in case of stress conditions such as supercoiled DNA or high salt concentrations. Probably acts by releasing the RNAP, when it is trapped or immobilized on tightly supercoiled DNA. Does not activate transcription on linear DNA. Probably not involved in DNA repair. The polypeptide is RNA polymerase-associated protein RapA (Shewanella baltica (strain OS155 / ATCC BAA-1091)).